A 126-amino-acid polypeptide reads, in one-letter code: Fatty acid-binding protein 1, liver (126 aa).

It belongs to the calycin superfamily. Fatty-acid binding protein (FABP) family.

Its subcellular location is the cytoplasm. Functionally, binds free fatty acids and their coenzyme A derivatives, bilirubin, and some other small molecules in the cytoplasm. May be involved in intracellular lipid transport. The specificity of axolotl L-FABP differs from that of LB-FABP. The polypeptide is Fatty acid-binding protein 1, liver (Ambystoma mexicanum (Axolotl)).